Here is a 481-residue protein sequence, read N- to C-terminus: Endonuclease Bax1 (481 aa).

Residues 1 to 136 form an N-terminal domain (NTD) region; sequence MLPWELARFS…EKKIIKAPTI (136 aa). Residues 158–250 are central domain (CRD); the sequence is YKLTVYVSSN…LKLANFKELK (93 aa). The segment at 260–364 is nuclease domain (NUS); the sequence is DSSVEEKFYK…YKRKIDISLV (105 aa). Residues Glu-265, Asp-297, and Glu-310 each contribute to the a divalent metal cation site. The segment at 414–481 is C-terminal domain (CTD); sequence PGYIFLKNYY…AIVIKDKKVN (68 aa).

It belongs to the Bax1 family. As to quaternary structure, homodimer in solution, forms a heterodimer with XPB2. It depends on a divalent metal cation as a cofactor.

Functionally, a dual DNA endonuclease probably involved in nucleotide excision repair (NER). The N-terminal nuclease domain (NTD) of the XPB2-Bax1 complex cleaves on one side of a DNA bubble (which presumably mimics DNA damage), while the NUS nuclease domain cleaves the other side, respectively called 5' and 3' nuclease activities. Interaction with XPB blocks the NTD nuclease activity. Binds to and stimulates the ATPase activity (and probably also helicase activity) of XPB2. Increases affinity of XPB2 for forked DNA. Does not stimulate the DNA-dependent activity of XPB1. In an XPB2-Bax1-bubble DNA crystal (12 bp of dsDNA, a 6 base bubble and 6 bp of dsDNA) the short 6 bp arm is unwound. The 2 helicase and the ThM domains of XPB2 with the NTD and CRD domains of Bax1 encircle the DNA, forming a tunnel where the 12 bp dsDNA and the ds-ssDNA junction are located. The ThM domain is wedged between the ssDNA tails, with the 5' ssDNA contacting Bax1 and the 3' ssDNA in a channel in XPB2. The nuclease domain (NUS) of Bax1 does not contact DNA in the bubble DNA complex. This is Endonuclease Bax1 from Sulfurisphaera tokodaii (strain DSM 16993 / JCM 10545 / NBRC 100140 / 7) (Sulfolobus tokodaii).